Reading from the N-terminus, the 568-residue chain is NADPH oxidase 3 (568 aa).

The Cytoplasmic segment spans residues 1-13 (MMGCWILNEGLST). The helical transmembrane segment at 14 to 34 (ILVLSWLGINFYLFIDTFYWY) threads the bilayer. Residues 35-51 (EEEESFHYTRVILGSTL) are Extracellular-facing. Residues 52–72 (AWARASALCLNFNCMLILIPV) form a helical membrane-spanning segment. In terms of domain architecture, Ferric oxidoreductase spans 55 to 284 (RASALCLNFN…VVLYACERII (230 aa)). Residues 73–103 (SRNLISFIRGTSICCRGPWRRQLDKNLRFHK) lie on the Cytoplasmic side of the membrane. A helical membrane pass occupies residues 104-124 (LVAYGIAVNATIHIVAHFFNL). Residues 125–167 (ERYHWSQSEEAQGLLAALSKLGNTPNESYLNPVRTFPTNTTTE) lie on the Extracellular side of the membrane. The N-linked (GlcNAc...) asparagine glycan is linked to Asn-163. Residues 168 to 188 (LLRTIAGVTGLVISLALVLIM) traverse the membrane as a helical segment. Over 189–201 (TSSTEFIRQASYE) the chain is Cytoplasmic. Residues 202-222 (LFWYTHHVFIVFFLSLAIHGT) traverse the membrane as a helical segment. Residues 223 to 395 (GRIVRGQTQD…DGPFGTALTD (173 aa)) lie on the Extracellular side of the membrane. Asn-238 is a glycosylation site (N-linked (GlcNAc...) asparagine). An FAD-binding FR-type domain is found at 285–395 (RFWRFQQEVV…DGPFGTALTD (111 aa)). Residues 396 to 416 (VFHYPVCVCVAAGIGVTPFAA) form a helical membrane-spanning segment. The Cytoplasmic portion of the chain corresponds to 417-568 (LLKSIWYKCS…VHFYYNKESF (152 aa)).

In terms of assembly, interacts with CYBA/p22phox. Heterodimerization with CYBA/p22phox is essential for its activity and cell membrane localization. Requires heme as cofactor. In terms of processing, N-glycosylated in a CYBA/p22phox-dependent manner.

The protein localises to the cell membrane. The enzyme catalyses NADPH + 2 O2 = 2 superoxide + NADP(+) + H(+). With respect to regulation, activated by the ototoxic drug cisplatin. Activated by NOXO1. Cooperatively activated by NCF1 and NCF2 or NOXA1 in a phorbol 12-myristate 13-acetate (PMA)-dependent manner. Inhibited by diphenyleneiodonium chloride. In terms of biological role, NADPH oxidase that catalyzes the generation of superoxide from molecular oxygen utilizing NADPH as an electron donor, upon formation of a complex with CYBA/p22phox. Plays a role in the biogenesis of otoconia/otolith, which are crystalline structures of the inner ear involved in the perception of gravity. This is NADPH oxidase 3 (NOX3) from Homo sapiens (Human).